The sequence spans 283 residues: Circadian clock oscillator protein KaiA (283 aa).

Residues 3–133 (QSTALTICGL…VKLCPGCAVP (131 aa)) form a psR domain, binds oxidized quinones region. One can recognise a KaiA N-terminal domain in the interval 3–163 (QSTALTICGL…RLSQKLKERL (161 aa)). A flexible linker region spans residues 164-172 (GYLGVYYKR). The KaiA C-terminal domain occupies 173-281 (DTAFFFRRMS…CEMYRRSIPR (109 aa)).

As to quaternary structure, homodimer. The KaiABC complex composition changes during the circadian cycle to control KaiC phosphorylation. Complexes KaiC(6), KaiA(2-4):KaiC(6), KaiB(6):KaiC(6) and KaiC(6):KaiB(6):KaiA(12) are among the most important forms, many form cooperatively. KaiA and CikA bind to the same region of the KaiB(fs) form and therefore compete.

Its function is as follows. Key component of the KaiABC oscillator complex, which constitutes the main circadian regulator in cyanobacteria. Complex composition changes during the circadian cycle to control KaiC phosphorylation. KaiA stimulates KaiC autophosphorylation, while KaiB sequesters KaiA, leading to KaiC autodephosphorylation. KaiA binding to the KaiC CII domain during the subjective day yields KaiA(2-4):KaiC(6) complexes which stimulate KaiC autophosphorylation. Phospho-Ser-431 KaiC accumulation triggers binding of KaiB during the subjective night to form the KaiB(6):KaiC(6) complex, leading to changes in the output regulators CikA and SasA. KaiB(6):KaiC(6) formation exposes a site for KaiA binding on KaiB that sequesters KaiA from KaiC's CII domain, making the KaiC(6):KaiB(6):KaiA(12) complex resulting in KaiC autodephosphorylation. Complete dephosphorylation of KaiC leads to dissociation of KaiA(2):KaiB(1), completing 1 cycle of the Kai oscillator. In terms of biological role, binds oxidized quinones via the N-terminal PsR domain, allowing it to sense redox changes and possibly mediate clock input. The protein is Circadian clock oscillator protein KaiA of Thermostichus vulcanus (Synechococcus vulcanus).